We begin with the raw amino-acid sequence, 196 residues long: GKGLDWFKKQWGKLKNSFKKVGAKVKAAFNKGRDFLKKKGIKVDPLNCQGSKCRSCLIFTLKPKKFCVEYAFSASAITISLTKEKDDEAKVLLGPFTIKTGNIPQCSKLGSFIGELCLQGVEGRLKSSNGKPHVNLCVGLLLKKFGCGAKICVSYVDGKFSGSFKPKLFAGDEENGTIMEAGDKEDEGKVIDAVPE.

It belongs to the redulysin-like family. Expressed by the venom gland.

The protein localises to the secreted. In terms of biological role, probable insecticidal toxin that has been detected in a semi-pure insecticidal fraction. This Platymeris biguttatus (Two-spotted assassin bug) protein is Venom platylysin.